The following is a 232-amino-acid chain: MVQTKRQKAIDLAVVPGKSYGIDEAIKILKTATKAKFIESVDVAIRLGVDVKKSDQQVRGSTLLPAGTGKAVRVAVFVPSGAKAEDALAAGADAVGMDDLAEKMQAGDLNYDVVIATPDAMRVVGKLGTLLGPRGLMPNPKVGTVSQNPGEAVKNAKSGQVRYRADKAGIIHCVIGKVSFDDEALKLNLQALLVDLIKIKPTASKGTYLQKVSLSSTMGPGVMIDQSTLSLK.

Belongs to the universal ribosomal protein uL1 family. Part of the 50S ribosomal subunit.

Its function is as follows. Binds directly to 23S rRNA. The L1 stalk is quite mobile in the ribosome, and is involved in E site tRNA release. Protein L1 is also a translational repressor protein, it controls the translation of the L11 operon by binding to its mRNA. The sequence is that of Large ribosomal subunit protein uL1 from Xylella fastidiosa (strain M12).